The following is a 193-amino-acid chain: Probable GTP-binding protein EngB (193 aa).

The 172-residue stretch at Gln22–Met193 folds into the EngB-type G domain. Residues Gly30–Ser37, Gly57–Thr61, Asp75–Gly78, Thr142–Asp145, and Phe174–Ala176 contribute to the GTP site. 2 residues coordinate Mg(2+): Ser37 and Thr59.

The protein belongs to the TRAFAC class TrmE-Era-EngA-EngB-Septin-like GTPase superfamily. EngB GTPase family. Mg(2+) is required as a cofactor.

In terms of biological role, necessary for normal cell division and for the maintenance of normal septation. The protein is Probable GTP-binding protein EngB of Anoxybacillus flavithermus (strain DSM 21510 / WK1).